We begin with the raw amino-acid sequence, 203 residues long: Large ribosomal subunit protein uL22 (203 aa).

Composition is skewed to polar residues over residues Gln-116–Tyr-126 and Val-134–Leu-167. Residues Gln-116–Lys-203 are disordered. Low complexity predominate over residues Ser-168–Thr-194.

This sequence belongs to the universal ribosomal protein uL22 family. In terms of assembly, part of the 50S ribosomal subunit.

In terms of biological role, this protein binds specifically to 23S rRNA; its binding is stimulated by other ribosomal proteins, e.g. L4, L17, and L20. It is important during the early stages of 50S assembly. It makes multiple contacts with different domains of the 23S rRNA in the assembled 50S subunit and ribosome. Its function is as follows. The globular domain of the protein is located near the polypeptide exit tunnel on the outside of the subunit, while an extended beta-hairpin is found that lines the wall of the exit tunnel in the center of the 70S ribosome. In Mesomycoplasma hyopneumoniae (strain 232) (Mycoplasma hyopneumoniae), this protein is Large ribosomal subunit protein uL22.